Here is a 2213-residue protein sequence, read N- to C-terminus: MARGARPSAAGGGGGGAEPPERAGPGRPRGSPPGRARPSLAPRPGPEPSRPRAAPETSGGDTAGAGRCGGRRAAKLGPGRRGWWALLALQLHLLRALAQDDVAPYFKTEPGLPQIHLEGNRLVLTCLAEGSWPLEFKWMRDDSELTTYSSEYKYIIPSLQKLDAGFYRCVVRNRMGALLQRKSEVQVAYMGSFMDTDQRKTVSQGRAAILNLLPITSYPRPQVTWFREGHKIIPSNRIAITLENQLVILATTTSDAGAYYVQAVNEKNGENKTSPFIHLSIARDVGTPETMAPTIVVPPGNRSVVAGSSETTLECIASARPVEDLSVTWKRNGVRITSGLHSFGRRLTISNPTSADTGPYVCEAALPGSAFEPARATAFLFIIEPPYFTAEPESRISAEVEETVDIGCQAMGVPLPTLQWYKDAISISRLQNPRYKVLASGGLRIQKLRPEDSGIFQCFASNEGGEIQTHTYLDVTNIAPVFTQRPVDTTVTDGMTAILRCEVSGAPKPAITWKRENHILASGSVRIPRFMLLESGGLQIAPVFIQDAGNYTCYAANTEGSLNASATLTVWNRTSIVHPPEDHVVIKGTTATLHCGATHDPRVSLRYVWKKDNVALTPSSTSRIVVEKDGSLLISQTWSGDIGDYSCEIVSEGGNDSRMARLEVIELPHSPQNLLVSPNSSHSHAVVLSWVRPFDGNSPILYYIVELSENNSPWKVHLSNVGPEMTGVTVSGLTPARTYQFRVCAVNEVGRGQYSAETSRLMLPEEPPSAPPKNIVASGRTNQSIMVQWQPPPETEHNGVLRGYILRYRLAGLPGEYQQRNITSPEVNYCLVTDLIIWTQYEIQVAAYNGAGLGVFSRAVTEYTLQGVPTAPPQNVQTEAVNSTTIQFLWNPPPQQFINGINQGYKLLAWPADAPEAVTVVTIAPDFHGVHHGHITNLKKFTAYFTSVLCFTTPGDGPPSTPQLVWTQEDKPGAVGHLSFTEILDTSLKVSWQEPLEKNGIITGYQISWEVYGRNDSRLTHTLNSTTHEYKIQGLSSLTTYTIDVAAVTAVGTGLVTSSTISSGVPPDLPGAPSNLVISNISPRSATLQFRPGYDGKTSISRWIVEGQVGAIGDEEEWVTLYEEENEPDAQMLEIPNLTPYTHYRFRMKQVNIVGPSPYSPSSRVIQTLQAPPDVAPTSVTVRTASETSLRLRWVPLPDSQYNGNPESVGYRIKYWRSDLQSSAVAQVVSDRLEREFTIEELEEWMEYELQMQAFNAVGAGPWSEVVRGRTRESVPSAAPENVSAEAVSSTQILLTWTSVPEQDQNGLILGYKILFRAKDLDPEPRSHIVRGNHTQSALLAGLRKFVLYELQVLAFTRIGNGVPSTPLILERTKDDAPGPPVRLVFPEVRLTSVRIVWQPPEEPNGIILGYQIAYRLASSSPHTFTTVEVGATVRQFTATDLAPESAYIFRLSAKTRQGWGEPLEATVITTEKRERPAPPRELLVPQAEVTARSLRLQWVPGSDGASPIRYFTMQVRELPRGEWQTYSSSISHEATACVVDRLRPFTSYKLRLKATNDIGDSDFSSETEAVTTLQDVPGEPPGSVSATPHTTSSVLIQWQPPRDESLNGLLQGYRIYYRELEYEAGSGTEAKTLKNPIALHAELTAQSSFKTVNSSSTSTMCELTHLKKYRRYEVIMTAYNIIGESPASAPVEVFVGEAAPAMAPQNVQVTPLTASQLEVTWDPPPPESQNGNIQGYKIYYWEADSQNETEKMKVLFLPEPVVRLKNLTSHTKYLVSISAFNAAGDGPKSDPQQGRTHQAAPGAPSFLAFSEITSTTLNVSWGEPAAANGILQGYRVVYEPLAPVQGVSKVVTVEVRGNWQRWLKVRDLTKGVTYFFRVQARTITYGPELQANITAGPAEGSPGSPRDVLVTKSASELTLQWTEGHSGDTPTTGYVIEARPSDEGLWDMFVKDIPRSATSYTLSLDKLRQGVTYEFRVVAVNEAGYGEPSNPSTAVSAQVEAPFYEEWWFLLVMALSSLIVILLVVFALVLHGQNKKYKNCSTGKGISTMEESVTLDNGGFAALELSSRHLNVKSTFSKKNGTRSPPRPSPGGLHYSDEDICNKYNGAVLTESVSLKEKSADASESEATDSDYEDALPKHSFVNHYMSDPTYYNSWKRRAQGRAPAPHRYEAVAGSEAGAQLHPVITTQSAGGVYTPAGPGARTPLTGFSSFV.

Residues 1–73 (MARGARPSAA…GAGRCGGRRA (73 aa)) are disordered. The segment covering 23–38 (AGPGRPRGSPPGRARP) has biased composition (low complexity). Ig-like C2-type domains are found at residues 104–186 (PYFK…SEVQ), 191–277 (GSFM…SPFI), 293–378 (PTIV…RATA), 386–476 (PYFT…LDVT), and 480–569 (PVFT…ATLT). Cys126 and Cys169 are disulfide-bonded. Residues Asn271 and Asn301 are each glycosylated (N-linked (GlcNAc...) asparagine). 3 disulfides stabilise this stretch: Cys315–Cys362, Cys408–Cys458, and Cys501–Cys553. N-linked (GlcNAc...) asparagine glycosylation is found at Asn550, Asn563, and Asn572. Positions 574–663 (TSIVHPPEDH…GNDSRMARLE (90 aa)) constitute an Ig-like C2-type 6 domain. A disulfide bridge connects residues Cys595 and Cys647. N-linked (GlcNAc...) asparagine glycosylation is found at Asn655, Asn679, Asn782, Asn821, Asn882, Asn1015, and Asn1024. 13 consecutive Fibronectin type-III domains span residues 670-766 (SPQN…LPEE), 771-867 (PPKN…TLQG), 872-970 (PPQN…TQED), 974-1068 (AVGH…VPPD), 1072-1171 (APSN…TLQA), 1176-1274 (APTS…TRES), 1279-1376 (APEN…TKDD), 1380-1474 (PPVR…TEKR), 1479-1576 (PPRE…TLQD), 1581-1699 (PPGS…VGEA), 1704-1800 (APQN…THQA), 1804-1899 (APSF…AGPA), and 1902-2000 (SPGS…SAQV). Asn1282 and Asn1333 each carry an N-linked (GlcNAc...) asparagine glycan. N-linked (GlcNAc...) asparagine glycans are attached at residues Asn1654, Asn1748, Asn1767, Asn1819, and Asn1893. Residues 2010 to 2030 (FLLVMALSSLIVILLVVFALV) traverse the membrane as a helical segment. Over 2031-2213 (LHGQNKKYKN…TPLTGFSSFV (183 aa)) the chain is Cytoplasmic. The disordered stretch occupies residues 2075-2098 (STFSKKNGTRSPPRPSPGGLHYSD). The short motif at 2207 to 2213 (TGFSSFV) is the PDZ-binding element.

Belongs to the sidekick family. Homodimer; mediates homophilic interactions to promote cell adhesion. As to expression, up-regulated in glomeruli in HIV-associated nephropathy. In diseased glomeruli, significantly overexpressed and the expression is no longer restricted to mesangial cells but includes podocytes and parietal epithelial cells.

It is found in the cell membrane. The protein localises to the synapse. Its function is as follows. Adhesion molecule that promotes lamina-specific synaptic connections in the retina. Expressed in specific subsets of interneurons and retinal ganglion cells (RGCs) and promotes synaptic connectivity via homophilic interactions. In Homo sapiens (Human), this protein is Protein sidekick-1.